The following is a 1134-amino-acid chain: DNA polymerase II large subunit (1134 aa).

Belongs to the archaeal DNA polymerase II family. Heterodimer of a large subunit and a small subunit.

The catalysed reaction is DNA(n) + a 2'-deoxyribonucleoside 5'-triphosphate = DNA(n+1) + diphosphate. The enzyme catalyses Exonucleolytic cleavage in the 3'- to 5'-direction to yield nucleoside 5'-phosphates.. Functionally, possesses two activities: a DNA synthesis (polymerase) and an exonucleolytic activity that degrades single-stranded DNA in the 3'- to 5'-direction. Has a template-primer preference which is characteristic of a replicative DNA polymerase. This is DNA polymerase II large subunit from Methanocella arvoryzae (strain DSM 22066 / NBRC 105507 / MRE50).